The chain runs to 206 residues: Small ribosomal subunit protein uS4c (206 aa).

Residues 93 to 161 (MRLDNIVYRL…IEKNIELLDK (69 aa)) form the S4 RNA-binding domain.

Belongs to the universal ribosomal protein uS4 family. Part of the 30S ribosomal subunit. Contacts protein S5. The interaction surface between S4 and S5 is involved in control of translational fidelity.

The protein resides in the plastid. One of the primary rRNA binding proteins, it binds directly to 16S rRNA where it nucleates assembly of the body of the 30S subunit. Its function is as follows. With S5 and S12 plays an important role in translational accuracy. The polypeptide is Small ribosomal subunit protein uS4c (rps4) (Euglena longa (Euglenophycean alga)).